The sequence spans 549 residues: Glucose-6-phosphate isomerase (549 aa).

Residue glutamate 353 is the Proton donor of the active site. Active-site residues include histidine 384 and lysine 513.

This sequence belongs to the GPI family.

Its subcellular location is the cytoplasm. The catalysed reaction is alpha-D-glucose 6-phosphate = beta-D-fructose 6-phosphate. The protein operates within carbohydrate biosynthesis; gluconeogenesis. It participates in carbohydrate degradation; glycolysis; D-glyceraldehyde 3-phosphate and glycerone phosphate from D-glucose: step 2/4. Catalyzes the reversible isomerization of glucose-6-phosphate to fructose-6-phosphate. This is Glucose-6-phosphate isomerase from Brucella anthropi (strain ATCC 49188 / DSM 6882 / CCUG 24695 / JCM 21032 / LMG 3331 / NBRC 15819 / NCTC 12168 / Alc 37) (Ochrobactrum anthropi).